A 124-amino-acid chain; its full sequence is MATAYQPMKPGKAGLEEPLEQIHKIRITLSSKNVKNLEKVCTDLVRGAKDKRLRVKGPVRMPTKVLKITTRKAPCGEGTNTWDRFELRVHKRVIDLFSSPDVVKQITSITIEPGVEVEVTIADS.

The protein belongs to the universal ribosomal protein uS10 family.

The polypeptide is Small ribosomal subunit protein uS10z/uS10x (RPS20A) (Arabidopsis thaliana (Mouse-ear cress)).